The chain runs to 652 residues: DNA ligase (652 aa).

Residues 29–33 (DSDYD), 78–79 (SL), and Glu107 each bind NAD(+). Catalysis depends on Lys109, which acts as the N6-AMP-lysine intermediate. NAD(+) contacts are provided by Arg130, Glu164, Lys278, and Lys302. Zn(2+) contacts are provided by Cys395, Cys398, Cys413, and Cys418. The BRCT domain occupies 577 to 652 (NSDAALFGLT…IEDEDWLRQL (76 aa)).

This sequence belongs to the NAD-dependent DNA ligase family. LigA subfamily. It depends on Mg(2+) as a cofactor. Requires Mn(2+) as cofactor.

The catalysed reaction is NAD(+) + (deoxyribonucleotide)n-3'-hydroxyl + 5'-phospho-(deoxyribonucleotide)m = (deoxyribonucleotide)n+m + AMP + beta-nicotinamide D-nucleotide.. In terms of biological role, DNA ligase that catalyzes the formation of phosphodiester linkages between 5'-phosphoryl and 3'-hydroxyl groups in double-stranded DNA using NAD as a coenzyme and as the energy source for the reaction. It is essential for DNA replication and repair of damaged DNA. This is DNA ligase from Streptococcus pyogenes serotype M3 (strain ATCC BAA-595 / MGAS315).